We begin with the raw amino-acid sequence, 233 residues long: Tropomyosin (233 aa).

Residues 6–222 (FDTVNEKYQE…KERYKAISDE (217 aa)) adopt a coiled-coil conformation. Residues 48 to 88 (MERSEERLQTATEKLEEASKAADESERNRKVLENLNNASEE) form a disordered region. Residues 51-79 (SEERLQTATEKLEEASKAADESERNRKVL) are compositionally biased toward basic and acidic residues.

This sequence belongs to the tropomyosin family. Homodimer.

Functionally, tropomyosin, in association with the troponin complex, plays a central role in the calcium dependent regulation of muscle contraction. This is Tropomyosin from Magallana gigas (Pacific oyster).